The primary structure comprises 342 residues: Vancomycin B-type resistance protein VanB (342 aa).

ATP contacts are provided by residues Lys132, 168 to 170 (FVK), 176 to 177 (SS), 206 to 213 (EQAISGCE), and Phe240. The ATP-grasp domain occupies 136 to 337 (YILTKNAGIA…LPALIDSLIT (202 aa)). His243 serves as a coordination point for substrate. 303–304 (NE) contributes to the ATP binding site. Residues Glu304 and Asn306 each contribute to the Mg(2+) site.

It belongs to the D-alanine--D-alanine ligase family. It depends on Mg(2+) as a cofactor. Mn(2+) is required as a cofactor.

The protein localises to the cell membrane. It carries out the reaction (R)-lactate + D-alanine + ATP = D-alanyl-(R)-lactate + ADP + phosphate. Required for high-level resistance to glycopeptides antibiotics. D-Ala--D-Ala ligase of altered specificity which catalyzes ester bond formation between D-Ala and various D-hydroxy acids; producing a peptidoglycan which does not terminate in D-alanine but in D-lactate, thus preventing vancomycin binding. The sequence is that of Vancomycin B-type resistance protein VanB (vanB) from Enterococcus faecalis (strain ATCC 700802 / V583).